A 306-amino-acid polypeptide reads, in one-letter code: Aspartate carbamoyltransferase catalytic subunit (306 aa).

Carbamoyl phosphate-binding residues include Arg-51 and Thr-52. Residue Lys-79 coordinates L-aspartate. The carbamoyl phosphate site is built by Arg-101, His-130, and Gln-133. The L-aspartate site is built by Arg-163 and Arg-215. Carbamoyl phosphate-binding residues include Gly-256 and Pro-257.

The protein belongs to the aspartate/ornithine carbamoyltransferase superfamily. ATCase family. Heterododecamer (2C3:3R2) of six catalytic PyrB chains organized as two trimers (C3), and six regulatory PyrI chains organized as three dimers (R2).

It catalyses the reaction carbamoyl phosphate + L-aspartate = N-carbamoyl-L-aspartate + phosphate + H(+). The protein operates within pyrimidine metabolism; UMP biosynthesis via de novo pathway; (S)-dihydroorotate from bicarbonate: step 2/3. In terms of biological role, catalyzes the condensation of carbamoyl phosphate and aspartate to form carbamoyl aspartate and inorganic phosphate, the committed step in the de novo pyrimidine nucleotide biosynthesis pathway. The chain is Aspartate carbamoyltransferase catalytic subunit from Ehrlichia ruminantium (strain Welgevonden).